Reading from the N-terminus, the 156-residue chain is Small ribosomal subunit protein uS7 (156 aa).

It belongs to the universal ribosomal protein uS7 family. Part of the 30S ribosomal subunit. Contacts proteins S9 and S11.

Functionally, one of the primary rRNA binding proteins, it binds directly to 16S rRNA where it nucleates assembly of the head domain of the 30S subunit. Is located at the subunit interface close to the decoding center, probably blocks exit of the E-site tRNA. This chain is Small ribosomal subunit protein uS7, found in Shigella dysenteriae serotype 1 (strain Sd197).